The sequence spans 346 residues: Fe(3+) ions import ATP-binding protein FbpC 1 (346 aa).

An ABC transporter domain is found at 5–235 (LEVDGVDKSF…PIDVPTAEFI (231 aa)). An ATP-binding site is contributed by 37–44 (GPSGCGKT).

The protein belongs to the ABC transporter superfamily. Fe(3+) ion importer (TC 3.A.1.10) family. In terms of assembly, the complex is composed of two ATP-binding proteins (FbpC), two transmembrane proteins (FbpB) and a solute-binding protein (FbpA).

Its subcellular location is the cell membrane. The catalysed reaction is Fe(3+)(out) + ATP + H2O = Fe(3+)(in) + ADP + phosphate + H(+). Its function is as follows. Part of the ABC transporter complex FbpABC involved in Fe(3+) ions import. Responsible for energy coupling to the transport system. This Rhodococcus jostii (strain RHA1) protein is Fe(3+) ions import ATP-binding protein FbpC 1.